The primary structure comprises 116 residues: Mercuric transport protein MerT (116 aa).

The next 2 membrane-spanning stretches (helical) occupy residues 16 to 36 (LAAI…ALGF) and 46 to 66 (VLEP…FFAW). The Hg(2+) site is built by C24 and C25. Residues C76 and C82 each contribute to the Hg(2+) site. Residues 94–114 (IFWFVAVLVLVALGFPYVMPF) form a helical membrane-spanning segment.

This sequence belongs to the MerT family.

It is found in the cell inner membrane. Functionally, involved in mercury resistance. Probably transfers a mercuric ion from the periplasmic Hg(2+)-binding protein MerP to the cytoplasmic mercuric reductase MerA. This is Mercuric transport protein MerT from Acinetobacter calcoaceticus.